The chain runs to 24 residues: Brevinin-1PTa (24 aa).

A disulfide bond links Cys18 and Cys24.

Expressed by the skin glands.

It is found in the secreted. Its function is as follows. Has antibacterial activity against the Gram-positive bacterium S.aureus ATCC 25923 (MIC=3 uM) and the Gram-negative bacterium E.coli ATCC 25726 (MIC=24 uM). In Pulchrana picturata (Malaysian fire frog), this protein is Brevinin-1PTa.